The primary structure comprises 397 residues: Elongation factor Tu (397 aa).

A tr-type G domain is found at 10–206 (KPHVNIGTIG…ACDDYIPEPV (197 aa)). Residues 19-26 (GHIDHGKT) are G1. 19-26 (GHIDHGKT) contributes to the GTP binding site. Thr-26 is a binding site for Mg(2+). The tract at residues 62-66 (GITIS) is G2. The interval 83-86 (DCPG) is G3. GTP-binding positions include 83–87 (DCPGH) and 138–141 (NKAD). The G4 stretch occupies residues 138–141 (NKAD). Residues 176 to 178 (SAL) are G5.

It belongs to the TRAFAC class translation factor GTPase superfamily. Classic translation factor GTPase family. EF-Tu/EF-1A subfamily. As to quaternary structure, monomer.

It localises to the cytoplasm. The catalysed reaction is GTP + H2O = GDP + phosphate + H(+). In terms of biological role, GTP hydrolase that promotes the GTP-dependent binding of aminoacyl-tRNA to the A-site of ribosomes during protein biosynthesis. In Acidothermus cellulolyticus (strain ATCC 43068 / DSM 8971 / 11B), this protein is Elongation factor Tu.